Here is a 188-residue protein sequence, read N- to C-terminus: V-type ATP synthase subunit E (188 aa).

This sequence belongs to the V-ATPase E subunit family.

Produces ATP from ADP in the presence of a proton gradient across the membrane. The chain is V-type ATP synthase subunit E (atpE) from Thermus thermophilus (strain ATCC 27634 / DSM 579 / HB8).